The chain runs to 72 residues: MSLEILDQLEEKIKQAVETIQLLQLEVEELKEKNAESQRNIENLQTENEQLKNEHRNWQEHIRSLLGKFDNV.

Positions 1–71 (MSLEILDQLE…IRSLLGKFDN (71 aa)) form a coiled coil.

The protein belongs to the ZapB family. In terms of assembly, homodimer. The ends of the coiled-coil dimer bind to each other, forming polymers. Interacts with FtsZ.

The protein resides in the cytoplasm. In terms of biological role, non-essential, abundant cell division factor that is required for proper Z-ring formation. It is recruited early to the divisome by direct interaction with FtsZ, stimulating Z-ring assembly and thereby promoting cell division earlier in the cell cycle. Its recruitment to the Z-ring requires functional FtsA or ZipA. In Haemophilus influenzae (strain 86-028NP), this protein is Cell division protein ZapB.